Here is a 425-residue protein sequence, read N- to C-terminus: Glutamyl-tRNA reductase (425 aa).

Substrate-binding positions include 49-52 (TCNR), Ser109, 114-116 (EGQ), and Gln120. The active-site Nucleophile is the Cys50. 189 to 194 (GAGETG) is an NADP(+) binding site.

It belongs to the glutamyl-tRNA reductase family. As to quaternary structure, homodimer.

It catalyses the reaction (S)-4-amino-5-oxopentanoate + tRNA(Glu) + NADP(+) = L-glutamyl-tRNA(Glu) + NADPH + H(+). It functions in the pathway porphyrin-containing compound metabolism; protoporphyrin-IX biosynthesis; 5-aminolevulinate from L-glutamyl-tRNA(Glu): step 1/2. It participates in porphyrin-containing compound metabolism; chlorophyll biosynthesis. Functionally, catalyzes the NADPH-dependent reduction of glutamyl-tRNA(Glu) to glutamate 1-semialdehyde (GSA). The protein is Glutamyl-tRNA reductase of Pelodictyon phaeoclathratiforme (strain DSM 5477 / BU-1).